A 364-amino-acid polypeptide reads, in one-letter code: UDP-N-acetylglucosamine--N-acetylmuramyl-(pentapeptide) pyrophosphoryl-undecaprenol N-acetylglucosamine transferase (364 aa).

Residues T14 to G16, N126, R163, S190, I246, A265 to E270, and Q291 contribute to the UDP-N-acetyl-alpha-D-glucosamine site.

It belongs to the glycosyltransferase 28 family. MurG subfamily.

It localises to the cell inner membrane. It carries out the reaction di-trans,octa-cis-undecaprenyl diphospho-N-acetyl-alpha-D-muramoyl-L-alanyl-D-glutamyl-meso-2,6-diaminopimeloyl-D-alanyl-D-alanine + UDP-N-acetyl-alpha-D-glucosamine = di-trans,octa-cis-undecaprenyl diphospho-[N-acetyl-alpha-D-glucosaminyl-(1-&gt;4)]-N-acetyl-alpha-D-muramoyl-L-alanyl-D-glutamyl-meso-2,6-diaminopimeloyl-D-alanyl-D-alanine + UDP + H(+). Its pathway is cell wall biogenesis; peptidoglycan biosynthesis. In terms of biological role, cell wall formation. Catalyzes the transfer of a GlcNAc subunit on undecaprenyl-pyrophosphoryl-MurNAc-pentapeptide (lipid intermediate I) to form undecaprenyl-pyrophosphoryl-MurNAc-(pentapeptide)GlcNAc (lipid intermediate II). The polypeptide is UDP-N-acetylglucosamine--N-acetylmuramyl-(pentapeptide) pyrophosphoryl-undecaprenol N-acetylglucosamine transferase (Shewanella loihica (strain ATCC BAA-1088 / PV-4)).